The primary structure comprises 141 residues: uncharacterized protein (141 aa).

This is an uncharacterized protein from Clostridium pasteurianum.